A 569-amino-acid polypeptide reads, in one-letter code: Cryptochrome DASH, chloroplastic/mitochondrial (569 aa).

In terms of domain architecture, Photolyase/cryptochrome alpha/beta spans 84 to 221; the sequence is GVTILWFRND…KLELIWGSTM (138 aa). FAD is bound by residues Tyr316 and 329–333; that span reads STKFS. Arg436 is an ATP binding site. FAD-binding residues include Asp466 and Asp468. Asp485 provides a ligand contact to ATP. A disordered region spans residues 541 to 569; sequence GNGPMAGGSKSGGGFRGSHSGRRSRHNGP. Residues 544 to 556 are compositionally biased toward gly residues; that stretch reads PMAGGSKSGGGFR. Residues 559–569 are compositionally biased toward basic residues; sequence HSGRRSRHNGP.

This sequence belongs to the DNA photolyase class-1 family. In terms of assembly, homodimer. Requires FAD as cofactor. (6R)-5,10-methylene-5,6,7,8-tetrahydrofolate is required as a cofactor.

It is found in the plastid. Its subcellular location is the chloroplast. The protein resides in the mitochondrion. Its function is as follows. May have a photoreceptor function. Binds ss- and ds-DNA in a sequence non-specific manner. Has a photolyase activity specific for cyclobutane pyrimidine dimers in ssDNA. In Arabidopsis thaliana (Mouse-ear cress), this protein is Cryptochrome DASH, chloroplastic/mitochondrial (CRYD).